The sequence spans 643 residues: Threonine--tRNA ligase (643 aa).

Residues 1-61 (MPIITLPDGA…SVNANINIIT (61 aa)) form the TGS domain. The interval 242–533 (DHRKIGKKLD…LIEEYEGKFP (292 aa)) is catalytic. 3 residues coordinate Zn(2+): C333, H384, and H510.

The protein belongs to the class-II aminoacyl-tRNA synthetase family. As to quaternary structure, homodimer. Zn(2+) is required as a cofactor.

Its subcellular location is the cytoplasm. It catalyses the reaction tRNA(Thr) + L-threonine + ATP = L-threonyl-tRNA(Thr) + AMP + diphosphate + H(+). Its function is as follows. Catalyzes the attachment of threonine to tRNA(Thr) in a two-step reaction: L-threonine is first activated by ATP to form Thr-AMP and then transferred to the acceptor end of tRNA(Thr). Also edits incorrectly charged L-seryl-tRNA(Thr). The chain is Threonine--tRNA ligase from Prochlorococcus marinus (strain SARG / CCMP1375 / SS120).